Consider the following 180-residue polypeptide: Bifunctional protein PyrR (180 aa).

The PRPP-binding motif lies at V101 to T113.

The protein belongs to the purine/pyrimidine phosphoribosyltransferase family. PyrR subfamily. In terms of assembly, homodimer and homohexamer; in equilibrium.

It carries out the reaction UMP + diphosphate = 5-phospho-alpha-D-ribose 1-diphosphate + uracil. Regulates transcriptional attenuation of the pyrimidine nucleotide (pyr) operon by binding in a uridine-dependent manner to specific sites on pyr mRNA. This disrupts an antiterminator hairpin in the RNA and favors formation of a downstream transcription terminator, leading to a reduced expression of downstream genes. In terms of biological role, also displays a weak uracil phosphoribosyltransferase activity which is not physiologically significant. This chain is Bifunctional protein PyrR, found in Oceanobacillus iheyensis (strain DSM 14371 / CIP 107618 / JCM 11309 / KCTC 3954 / HTE831).